The sequence spans 544 residues: MSIFIGGAWPYANGSLHLGHIASLLPGDILARYYRAKGENVLYVSGSDCNGTPIAIRAKQEGVTAKEIANKYHEEFQRCFRDLGFTYDCYTRTDSEHHHETVQKVFLRLLEEGYIYKKTVEQAYCKTCTQFLPDRYVEGICPHCHEAARGDQCDACSAILDPLDLLEKTCKLCGSTPSVEETEHFYFALHTFQQQIKKVVEIAKEKGTWRDNAIQLTERYVKEGLQDRVVSRDLPIGVPIPVKGYEDKKIYVWIEAVAGYYSASKYWAEETGKDDHEFWNSDAQTYYVHGKDNIPFHSIIWPAVLLGIGEEAIPRHIVSNEYLTVEKRKLSTSKNWAVWVPDILERYNPDSIRYFLTVNAPENRDTDFSWREFIYSHNSELLGAYGNFVNRTLKFIEKYYDGIVPQGTINVELKDKVEGLYKNVGEAIEQTTFKVALETIFDAVRFANKYFDERQPWKEREDNPVSCEETIYNCIYLIANFANLLEPFLPFSSERVRSTLSIVNRNWEPQNTLPNRIDSVQPLFERIDVKQIEHEIEKLYGAAK.

The 'HIGH' region signature appears at 10-20 (PYANGSLHLGH). The Zn(2+) site is built by Cys-141, Cys-144, Cys-153, and Cys-156. Residues 329–333 (KLSTS) carry the 'KMSKS' region motif. Thr-332 contributes to the ATP binding site.

Belongs to the class-I aminoacyl-tRNA synthetase family. MetG type 1 subfamily. As to quaternary structure, monomer. It depends on Zn(2+) as a cofactor.

It localises to the cytoplasm. The catalysed reaction is tRNA(Met) + L-methionine + ATP = L-methionyl-tRNA(Met) + AMP + diphosphate. In terms of biological role, is required not only for elongation of protein synthesis but also for the initiation of all mRNA translation through initiator tRNA(fMet) aminoacylation. In Bacillus cereus (strain G9842), this protein is Methionine--tRNA ligase.